The sequence spans 514 residues: RNA-binding region-containing protein 3 (514 aa).

The tract at residues 1 to 26 is disordered; the sequence is MAGPEPPMPLSRGGPGSASLSPPRGD. Residue Ser-21 is modified to Phosphoserine. In terms of domain architecture, RRM 1 spans 27–102; sequence RTLLVRHLPA…HTLVVEFAKE (76 aa). Disordered stretches follow at residues 106 to 133, 213 to 282, and 337 to 363; these read VHSP…EKKE, MPLH…VRKK, and ETQP…FGKI. Position 108 is a phosphoserine (Ser-108). Residues 115–133 are compositionally biased toward basic and acidic residues; it reads TEKKKRLDDTVENDKEKKE. Positions 217 to 230 are enriched in pro residues; it reads APLPPTSPQPPEEP. Ser-349 is modified (phosphoserine). The region spanning 418 to 501 is the RRM 2 domain; it reads CRIYVKNLAR…KPMVVQFARS (84 aa).

As to quaternary structure, component of the U11/U12 snRNPs that are part of the U12-type spliceosome. Found in a complex with m(7)G-capped U12 snRNA. Interacts with PDCD7.

The protein localises to the nucleus. Participates in pre-mRNA U12-dependent splicing, performed by the minor spliceosome which removes U12-type introns. U12-type introns comprises less than 1% of all non-coding sequences. Binds to the 3'-stem-loop of m(7)G-capped U12 snRNA. The sequence is that of RNA-binding region-containing protein 3 (Rnpc3) from Mus musculus (Mouse).